Here is a 151-residue protein sequence, read N- to C-terminus: 3-hydroxyacyl-[acyl-carrier-protein] dehydratase FabZ (151 aa).

Residue His56 is part of the active site.

The protein belongs to the thioester dehydratase family. FabZ subfamily.

The protein localises to the cytoplasm. The enzyme catalyses a (3R)-hydroxyacyl-[ACP] = a (2E)-enoyl-[ACP] + H2O. Involved in unsaturated fatty acids biosynthesis. Catalyzes the dehydration of short chain beta-hydroxyacyl-ACPs and long chain saturated and unsaturated beta-hydroxyacyl-ACPs. The polypeptide is 3-hydroxyacyl-[acyl-carrier-protein] dehydratase FabZ (Rhodopseudomonas palustris (strain HaA2)).